An 863-amino-acid polypeptide reads, in one-letter code: Glycogen phosphorylase (863 aa).

Lys-618 is subject to N6-(pyridoxal phosphate)lysine.

It belongs to the glycogen phosphorylase family. It depends on pyridoxal 5'-phosphate as a cofactor.

The enzyme catalyses [(1-&gt;4)-alpha-D-glucosyl](n) + phosphate = [(1-&gt;4)-alpha-D-glucosyl](n-1) + alpha-D-glucose 1-phosphate. In terms of biological role, phosphorylase is an important allosteric enzyme in carbohydrate metabolism. Enzymes from different sources differ in their regulatory mechanisms and in their natural substrates. However, all known phosphorylases share catalytic and structural properties. The polypeptide is Glycogen phosphorylase (glgP) (Mycobacterium tuberculosis (strain ATCC 25618 / H37Rv)).